The primary structure comprises 614 residues: MRPPQCLLHTPSLASPLLLLLLWLLGGGVGAEGREDAELLVTVRGGRLRGIRLKTPGGPVSAFLGIPFAEPPMGPRRFLPPEPKQPWSGVVDATTFQSVCYQYVDTLYPGFEGTEMWNPNRELSEDCLYLNVWTPYPRPTSPTPVLVWIYGGGFYSGASSLDVYDGRFLVQAERTVLVSMNYRVGAFGFLALPGSREAPGNVGLLDQRLALQWVQENVAAFGGDPTSVTLFGESAGAASVGMHLLSPPSRGLFHRAVLQSGAPNGPWATVGMGEARRRATQLAHLVGCPPGGTGGNDTELVACLRTRPAQVLVNHEWHVLPQESVFRFSFVPVVDGDFLSDTPEALINAGDFHGLQVLVGVVKDEGSYFLVYGAPGFSKDNESLISRAEFLAGVRVGVPQVSDLAAEAVVLHYTDWLHPEDPARLREALSDVVGDHNVVCPVAQLAGRLAAQGARVYAYVFEHRASTLSWPLWMGVPHGYEIEFIFGIPLDPSRNYTAEEKIFAQRLMRYWANFARTGDPNEPRDPKAPQWPPYTAGAQQYVSLDLRPLEVRRGLRAQACAFWNRFLPKLLSATDTLDEAERQWKAEFHRWSSYMVHWKNQFDHYSKQDRCSDL.

An N-terminal signal peptide occupies residues 1 to 31; the sequence is MRPPQCLLHTPSLASPLLLLLLWLLGGGVGA. Cys100 and Cys127 are joined by a disulfide. Trp117 is a galanthamine binding site. Residue Trp117 participates in huperzine A binding. Position 153 (Gly153) interacts with huprine W. Residue Tyr164 coordinates huperzine A. 233–234 is a galanthamine binding site; sequence ES. Residue Ser234 participates in huprine W binding. The active-site Acyl-ester intermediate is the Ser234. Residues Cys288 and Cys303 are joined by a disulfide bond. A glycan (N-linked (GlcNAc...) asparagine) is linked at Asn296. Glu365 functions as the Charge relay system in the catalytic mechanism. Tyr368 contacts galanthamine. Tyr368 serves as a coordination point for huperzine A. Asn381 is a glycosylation site (N-linked (GlcNAc...) asparagine). Cys440 and Cys560 are disulfide-bonded. Huprine W contacts are provided by Trp470 and His478. Residue His478 is the Charge relay system of the active site. An N-linked (GlcNAc...) asparagine glycan is attached at Asn495. Phe588 is lipidated: GPI-anchor amidated glycine.

The protein belongs to the type-B carboxylesterase/lipase family. As to quaternary structure, interacts with PRIMA1. The interaction with PRIMA1 is required to anchor it to the basal lamina of cells and organize into tetramers. Isoform H generates GPI-anchored dimers; disulfide linked. Isoform T generates multiple structures, ranging from monomers and dimers to collagen-tailed and hydrophobic-tailed forms, in which catalytic tetramers are associated with anchoring proteins that attach them to the basal lamina or to cell membranes. In the collagen-tailed forms, isoform T subunits are associated with a specific collagen, COLQ, which triggers the formation of isoform T tetramers, from monomers and dimers. Isoform R may be monomeric. As to expression, isoform H is highly expressed in erythrocytes.

The protein resides in the synapse. Its subcellular location is the secreted. It localises to the cell membrane. It is found in the nucleus. The catalysed reaction is acetylcholine + H2O = choline + acetate + H(+). Hydrolyzes rapidly the acetylcholine neurotransmitter released into the synaptic cleft allowing to terminate the signal transduction at the neuromuscular junction. Role in neuronal apoptosis. The protein is Acetylcholinesterase of Homo sapiens (Human).